The following is a 452-amino-acid chain: Maltoporin (452 aa).

Positions 1–25 are cleaved as a signal peptide; sequence MMITLRKLPLAVAVAAGVMSAQAMA.

Belongs to the porin LamB (TC 1.B.3) family. In terms of assembly, homotrimer formed of three 18-stranded antiparallel beta-barrels, containing three independent channels.

The protein localises to the cell outer membrane. The enzyme catalyses beta-maltose(in) = beta-maltose(out). Its function is as follows. Involved in the transport of maltose and maltodextrins. The sequence is that of Maltoporin from Salmonella newport (strain SL254).